The following is a 207-amino-acid chain: Large ribosomal subunit protein uL4 (207 aa).

A disordered region spans residues 54–74 (RSDVRGGGKKPYRQKGTGNAR).

The protein belongs to the universal ribosomal protein uL4 family. In terms of assembly, part of the 50S ribosomal subunit.

Functionally, one of the primary rRNA binding proteins, this protein initially binds near the 5'-end of the 23S rRNA. It is important during the early stages of 50S assembly. It makes multiple contacts with different domains of the 23S rRNA in the assembled 50S subunit and ribosome. In terms of biological role, forms part of the polypeptide exit tunnel. In Magnetococcus marinus (strain ATCC BAA-1437 / JCM 17883 / MC-1), this protein is Large ribosomal subunit protein uL4.